A 485-amino-acid polypeptide reads, in one-letter code: MEKKSLLILGTASHVGKSSVVTAICRILSRSYRVAPFKAQNMSLNSWITKDGKEIGIAQAIQAKAAGTEPTADMNPVLLKPKGDCVSQVVLLGEPYADKSAGQYYDSIEEMHAVLKGALERLWKEHDIIVMEGAGGAAEINLYERDIVNVGTARLTKAPIILVGDIERGGVFASLYGTIALLPEDVRKNVKGFIINKFRGDIEILRPGLKQLEDKTGIPVLGVLPHFKLRIPSEDSVSLGDKEDSKAEKEIEVAVIRLPRISNFTDFEPLEGLVKVRYVDINEELGNPDAIMIPGTKNTVNDLLDLRASGMDKKIQAFKGKVPIFGICGGYQMLGRTIFDSGVENGVEAEFEGLGLLDIGTRFGEYKKRTVQVTKKVNGYGPILRPIDGEEIKGYEIHMGVTDSNRTVFGDDGAIDEDGFVIGTYLHGLFDNRNIRNALVRYLYEKKGLEYEPDEAISENDAYEELANVVEQNIDMEKLFEIAGV.

In terms of domain architecture, GATase cobBQ-type spans 250 to 435 (EIEVAVIRLP…LHGLFDNRNI (186 aa)). Cys-328 (nucleophile) is an active-site residue. Residue His-427 is part of the active site.

It belongs to the CobB/CobQ family. CobQ subfamily.

It participates in cofactor biosynthesis; adenosylcobalamin biosynthesis. Its function is as follows. Catalyzes amidations at positions B, D, E, and G on adenosylcobyrinic A,C-diamide. NH(2) groups are provided by glutamine, and one molecule of ATP is hydrogenolyzed for each amidation. The sequence is that of Probable cobyric acid synthase from Methanosarcina mazei (strain ATCC BAA-159 / DSM 3647 / Goe1 / Go1 / JCM 11833 / OCM 88) (Methanosarcina frisia).